The chain runs to 63 residues: Beta-defensin 4 (63 aa).

The first 22 residues, 1–22 (MRIHYLLFSFLLVLLSPLSAFT), serve as a signal peptide directing secretion. Pyrrolidone carboxylic acid is present on Gln23. 3 disulfide bridges follow: Cys31-Cys59, Cys38-Cys52, and Cys42-Cys60.

This sequence belongs to the beta-defensin family. In terms of tissue distribution, highly expressed in lung.

The protein resides in the secreted. Functionally, exhibits antimicrobial activity against Gram-negative bacteria and Gram-positive bacteria. May act as a ligand for C-C chemokine receptor CCR6. Binds to CCR6 and induces chemotactic activity of CCR6-expressing cells. In Rattus norvegicus (Rat), this protein is Beta-defensin 4 (Defb4).